The following is a 346-amino-acid chain: L-malyl-CoA/beta-methylmalyl-CoA lyase (346 aa).

Mg(2+) is bound by residues Glu-148 and Asp-177. Substrate contacts are provided by residues 176–177 and 253–254; these read VD and LH.

It belongs to the HpcH/HpaI aldolase family. Requires Mg(2+) as cofactor. Mn(2+) serves as cofactor.

It catalyses the reaction (S)-malyl-CoA = glyoxylate + acetyl-CoA. The catalysed reaction is (2R,3S)-beta-methylmalyl-CoA = propanoyl-CoA + glyoxylate. Its function is as follows. Involved in the methylaspartate cycle. Catalyzes the reversible cleavage of beta-methylmalyl-CoA to propionyl-CoA and glyoxylate, as well as the reversible cleavage of (S)-malyl-CoA to acetyl-CoA and glyoxylate. In addition, it has a small malyl-CoA thioesterase activity. It can also catalyze the cleavage of (S)-citramalyl-CoA to acetyl-CoA and pyruvate. The sequence is that of L-malyl-CoA/beta-methylmalyl-CoA lyase (citE1) from Haloarcula marismortui (strain ATCC 43049 / DSM 3752 / JCM 8966 / VKM B-1809) (Halobacterium marismortui).